The chain runs to 191 residues: Holliday junction branch migration complex subunit RuvA (191 aa).

The domain I stretch occupies residues M1–L64. Positions N65 to I142 are domain II. Residues I143–D146 are flexible linker. The segment at D146 to Q191 is domain III.

This sequence belongs to the RuvA family. As to quaternary structure, homotetramer. Forms an RuvA(8)-RuvB(12)-Holliday junction (HJ) complex. HJ DNA is sandwiched between 2 RuvA tetramers; dsDNA enters through RuvA and exits via RuvB. An RuvB hexamer assembles on each DNA strand where it exits the tetramer. Each RuvB hexamer is contacted by two RuvA subunits (via domain III) on 2 adjacent RuvB subunits; this complex drives branch migration. In the full resolvosome a probable DNA-RuvA(4)-RuvB(12)-RuvC(2) complex forms which resolves the HJ.

It is found in the cytoplasm. Its function is as follows. The RuvA-RuvB-RuvC complex processes Holliday junction (HJ) DNA during genetic recombination and DNA repair, while the RuvA-RuvB complex plays an important role in the rescue of blocked DNA replication forks via replication fork reversal (RFR). RuvA specifically binds to HJ cruciform DNA, conferring on it an open structure. The RuvB hexamer acts as an ATP-dependent pump, pulling dsDNA into and through the RuvAB complex. HJ branch migration allows RuvC to scan DNA until it finds its consensus sequence, where it cleaves and resolves the cruciform DNA. In Ehrlichia ruminantium (strain Welgevonden), this protein is Holliday junction branch migration complex subunit RuvA.